Consider the following 187-residue polypeptide: Auxin-binding protein T92 (187 aa).

Residues 1–20 (MARHIIILVAVFWFATAEAS) form the signal peptide. An intrachain disulfide couples cysteine 22 to cysteine 177. Positions 78, 80, and 84 each coordinate Zn(2+). Asparagine 117 is a glycosylation site (N-linked (GlcNAc...) asparagine). Histidine 128 lines the Zn(2+) pocket. Residues 184 to 187 (KDEL) carry the Prevents secretion from ER motif.

Homodimer.

It localises to the endoplasmic reticulum lumen. In terms of biological role, this is probably a receptor for the plant hormone auxin. This is Auxin-binding protein T92 (T92) from Nicotiana tabacum (Common tobacco).